The following is a 252-amino-acid chain: Fructose-1,6-bisphosphatase/inositol-1-monophosphatase (252 aa).

The Mg(2+) site is built by aspartate 38, threonine 40, glutamate 67, aspartate 82, leucine 84, and aspartate 85. Substrate contacts are provided by residues 85–87 (DGT), arginine 167, alanine 172, and arginine 191. Position 200 (aspartate 200) interacts with Mg(2+).

The protein belongs to the inositol monophosphatase superfamily. FBPase class 4 family. In terms of assembly, homodimer. Mg(2+) serves as cofactor. The cofactor is Mn(2+).

It catalyses the reaction beta-D-fructose 1,6-bisphosphate + H2O = beta-D-fructose 6-phosphate + phosphate. The catalysed reaction is a myo-inositol phosphate + H2O = myo-inositol + phosphate. Both FBPase and IMPase activities are inhibited by Ca(2+). In contrast to mammalian I-1-P phosphatases, is only very weakly inhibited by Li(+) (with an IC(50) of about 290 mM). In terms of biological role, phosphatase with broad specificity; it can dephosphorylate fructose 1,6-bisphosphate, both D and L isomers of inositol-1-phosphate (I-1-P), 2'-AMP, pNPP, inositol-2-phosphate, beta-glycerol phosphate, and alpha-D-glucose-1-phosphate. Cannot hydrolyze glucose-6-phosphate and fructose-6-phosphate. May be involved in the biosynthesis of a unique osmolyte, di-myo-inositol 1,1-phosphate. In Archaeoglobus fulgidus (strain ATCC 49558 / DSM 4304 / JCM 9628 / NBRC 100126 / VC-16), this protein is Fructose-1,6-bisphosphatase/inositol-1-monophosphatase (suhB).